The sequence spans 260 residues: Vesicle-associated membrane protein 7B (260 aa).

Residues 1 to 189 lie on the Cytoplasmic side of the membrane; it reads MPIIYSLVAR…KCAMWWKNVK (189 aa). The 104-residue stretch at 7 to 110 folds into the Longin domain; sequence LVARGSSVLA…GMNSDFSRTL (104 aa). Residues 125–186 enclose the v-SNARE coiled-coil homology domain; the sequence is TMSRTMAEID…KQLKCAMWWK (62 aa). The chain crosses the membrane as a helical; Anchor for type IV membrane protein span at residues 190-210; sequence LMLVLGAIVLIIIFIIVMSYC. Over 211–260 the chain is Vesicular; that stretch reads DGFRSGSKCRSSPSSNSTPTPTPTETPTPTPTPTSTPTPSQLLETLLNQF. The segment at 215 to 250 is disordered; that stretch reads SGSKCRSSPSSNSTPTPTPTETPTPTPTPTSTPTPS. Over residues 230 to 246 the composition is skewed to pro residues; it reads TPTPTETPTPTPTPTST.

It belongs to the synaptobrevin family.

The protein resides in the cytoplasmic vesicle. It is found in the secretory vesicle membrane. The protein localises to the golgi apparatus. It localises to the trans-Golgi network membrane. Its subcellular location is the late endosome membrane. The protein resides in the lysosome membrane. It is found in the endoplasmic reticulum membrane. The protein localises to the phagosome membrane. Involved in the targeting and/or fusion of transport vesicles to their target membrane during transport of proteins from the early endosome to the lysosome. Required for heterotypic fusion of late endosomes with lysosomes and homotypic lysosomal fusion. The protein is Vesicle-associated membrane protein 7B of Dictyostelium discoideum (Social amoeba).